Consider the following 482-residue polypeptide: Matrix metalloproteinase-20 (482 aa).

Residues 1-21 form the signal peptide; it reads MKVLPASGLAVLVTALKFATA. A propeptide spanning residues 22-106 is cleaved from the precursor; the sequence is DPNLLAATPR…PRCGVPDVAN (85 aa). The Cysteine switch signature appears at 97 to 104; the sequence is PRCGVPDV. C99 is a Zn(2+) binding site. Ca(2+) contacts are provided by E163, A164, and D165. Residues H175 and D177 each contribute to the Zn(2+) site. Positions 182, 183, 185, and 187 each coordinate Ca(2+). Zn(2+) is bound at residue H190. Positions 196, 197, 199, and 201 each coordinate Ca(2+). H203 contributes to the Zn(2+) binding site. Positions 205 and 208 each coordinate Ca(2+). Residue H225 coordinates Zn(2+). Residue E226 is part of the active site. H229 and H235 together coordinate Zn(2+). 4 Hemopexin repeats span residues 292-342, 343-388, 390-438, and 439-482; these read PDLC…FPQL, MSNV…GFPR, VQRI…FSGV, and SGHI…WIGC. The cysteines at positions 295 and 482 are disulfide-linked.

Belongs to the peptidase M10A family. It depends on Zn(2+) as a cofactor. Requires Ca(2+) as cofactor. In terms of processing, autoactivates at least at the 106-Asn-|-Tyr-107 site. In terms of tissue distribution, expressed in the enamel organ.

Its subcellular location is the secreted. The protein resides in the extracellular space. It localises to the extracellular matrix. Its function is as follows. Degrades amelogenin, the major protein component of the enamel matrix and two of the macromolecules characterizing the cartilage extracellular matrix: aggrecan and the cartilage oligomeric matrix protein (COMP). May play a central role in tooth enamel formation. Cleaves aggrecan at the '360-Asn-|-Phe-361' site. In Mus musculus (Mouse), this protein is Matrix metalloproteinase-20 (Mmp20).